Consider the following 156-residue polypeptide: ATP synthase subunit b (156 aa).

Residues 11-31 form a helical membrane-spanning segment; the sequence is AIAFILFVAFCMKYVWPPLMA.

This sequence belongs to the ATPase B chain family. F-type ATPases have 2 components, F(1) - the catalytic core - and F(0) - the membrane proton channel. F(1) has five subunits: alpha(3), beta(3), gamma(1), delta(1), epsilon(1). F(0) has three main subunits: a(1), b(2) and c(10-14). The alpha and beta chains form an alternating ring which encloses part of the gamma chain. F(1) is attached to F(0) by a central stalk formed by the gamma and epsilon chains, while a peripheral stalk is formed by the delta and b chains.

The protein resides in the cell inner membrane. F(1)F(0) ATP synthase produces ATP from ADP in the presence of a proton or sodium gradient. F-type ATPases consist of two structural domains, F(1) containing the extramembraneous catalytic core and F(0) containing the membrane proton channel, linked together by a central stalk and a peripheral stalk. During catalysis, ATP synthesis in the catalytic domain of F(1) is coupled via a rotary mechanism of the central stalk subunits to proton translocation. Its function is as follows. Component of the F(0) channel, it forms part of the peripheral stalk, linking F(1) to F(0). This Erwinia tasmaniensis (strain DSM 17950 / CFBP 7177 / CIP 109463 / NCPPB 4357 / Et1/99) protein is ATP synthase subunit b.